A 393-amino-acid polypeptide reads, in one-letter code: Lysophosphatidic acid receptor 1 (393 aa).

Residues 1 to 50 (MAAASTSSPVVSQPQFTAMNEPQCFYNESIAFFYNRSGKYLATEWNTVSK) lie on the Extracellular side of the membrane. Intrachain disulfides connect Cys24–Cys190 and Cys188–Cys195. Residues Asn27 and Asn35 are each glycosylated (N-linked (GlcNAc...) asparagine). Lys39 contributes to the a 1-acyl-sn-glycero-3-phosphate binding site. Residues 51 to 75 (LVMGLGITVCIFIMLANLLVMVAIY) traverse the membrane as a helical segment. The Cytoplasmic segment spans residues 76-83 (VNRRFHFP). A helical membrane pass occupies residues 84-107 (IYYLMANLAAADFFAGLAYFYLMF). Topologically, residues 108-121 (NTGPNTRRLTVSTW) are extracellular. Residues 122–144 (LLRQGLIDTTVTASVANLLAIAI) form a helical membrane-spanning segment. Residue 124-129 (RQGLID) coordinates a 1-acyl-sn-glycero-3-phosphate. Residues 145–163 (ERHITVFRMQLHTRMSNRR) lie on the Cytoplasmic side of the membrane. A helical transmembrane segment spans residues 164-184 (VVVVIVVIWTMAIVMGAIPSV). Topologically, residues 185–204 (GWNCICDIENCSNMAPLYSD) are extracellular. A helical membrane pass occupies residues 205–225 (SYLVFWAIFNLVTFVVMVVLY). Trp210 is an a 1-acyl-sn-glycero-3-phosphate binding site. Over 226–255 (AHIFGYVRQRTMRMSRHSSGPRRNRDTMMS) the chain is Cytoplasmic. Residues 256–280 (LLKTVVIVLGAFIICWTPGLVLLLL) traverse the membrane as a helical segment. Over 281-294 (DVCCPQCDVLAYEK) the chain is Extracellular. A disulfide bridge connects residues Cys284 and Cys287. A helical transmembrane segment spans residues 295 to 315 (FFLLLAEFNSAMNPIIYSYRD). The Cytoplasmic portion of the chain corresponds to 316–393 (KEMSATFRQI…PPERPGQGRV (78 aa)). Ser341 carries the phosphoserine modification. At Thr351 the chain carries Phosphothreonine. Residues 369-381 (KMRGGHHLLRDEQ) show a composition bias toward basic and acidic residues. A disordered region spans residues 369–393 (KMRGGHHLLRDEQPPPPERPGQGRV).

Belongs to the G-protein coupled receptor 1 family. Interacts with RALA and GRK2. Interacts with GNAQ and GNA13. Interacts with CD14; the interaction is enhanced by exposure to bacterial lipopolysaccharide (LPS). In terms of processing, N-glycosylated. In terms of tissue distribution, detected in brain cortex and in pituitary pars tuberalis.

It localises to the cell surface. The protein resides in the cell membrane. The protein localises to the endosome. Its function is as follows. Receptor for lysophosphatidic acid (LPA). Plays a role in the reorganization of the actin cytoskeleton, cell migration, differentiation and proliferation, and thereby contributes to the responses to tissue damage and infectious agents. Activates downstream signaling cascades via the G(i)/G(o), G(12)/G(13), and G(q) families of heteromeric G proteins. Signaling inhibits adenylyl cyclase activity and decreases cellular cAMP levels. Signaling triggers an increase of cytoplasmic Ca(2+) levels. Activates RALA; this leads to the activation of phospholipase C (PLC) and the formation of inositol 1,4,5-trisphosphate. Signaling mediates activation of down-stream MAP kinases. Contributes to the regulation of cell shape. Promotes Rho-dependent reorganization of the actin cytoskeleton in neuronal cells and neurite retraction. Promotes the activation of Rho and the formation of actin stress fibers. Promotes formation of lamellipodia at the leading edge of migrating cells via activation of RAC1. Through its function as LPA receptor, plays a role in chemotaxis and cell migration, including responses to injury and wounding. Plays a role in triggering inflammation in response to bacterial lipopolysaccharide (LPS) via its interaction with CD14. Promotes cell proliferation in response to LPA. Inhibits the intracellular ciliogenesis pathway in response to LPA and through AKT1 activation. Required for normal skeleton development. May play a role in osteoblast differentiation. Required for normal brain development. Required for normal proliferation, survival and maturation of newly formed neurons in the adult dentate gyrus. Plays a role in pain perception and in the initiation of neuropathic pain. The polypeptide is Lysophosphatidic acid receptor 1 (LPAR1) (Ovis aries (Sheep)).